A 982-amino-acid chain; its full sequence is MSSEAVAQATAATTSPEHGVPTSSATPTPPPSKGGGAGGGGGGEQQQVPFQMIPPGHFFANPFLNPYIPTAGAPAQEGEAQPQMVFSPAQYQEVMHHYFQQMMAASGAQFPIPFPMQFQPALQQPRPSSQASSSHRSEDDNGRQTAGSVVSSNVSPNHREVRPAEDSTETSGVVQNNDELLVPTSTSSDVTIGDVIEKSDSPENSQESAGGEEKSEEKRKLSGDRTDSLIRKQMSEMEKEITRRSQNKNIKTIDDDGLAELIGGSSTRTVADDFSPFVDKSGLSYTAPAPPSTEKSAPKESLNQLRSSFNLPDDSTTVGPVGPSTVPQQSQQFANNSMFMANAGNFVQNAFPIGVTMTPQATFGAAPGFQMMQPHQHNLFMQQPNPTFVNNGTNPFLQTQATLPNFVQNGTAPLVPTVSAQQFTPEQLAAAFAQQQIAQSAAPTPFDSPPPSMPSTSSGPSGALAPPPPPSHPIPRRVSGNGWPEENKENGTSTSTTNGAQSVPAAAGTDDPVWVLRDSYLKKMQREQRTSEEEEMSWQEAATAAQEAAENGGGDDQEEQETDRLLNGGTTGASTKGAERRGSVDKKKNSKETMVHEPAVLIEGVLFRARYLGSTQMLCESRGSKAARMAQAQEAVARVKAPEGDVQPSTEIDLFISTEKIMVLNTDLQRISDTDVRQDILMDHALRTISYIADIGDLVVLMARRMSTSHSDESCSDGDSSGGGVRKTPKVICHVFESDEASFIAQSIGQAFQVAYVEFLRANGIDDPSYLRQIDYQEVLNSQELLGDELEMFAKKETQKEVVVPKKAGEPLGIVVVESGWGSMLPTVVLAHMNPVGPAAHSNKLNIGDQIININGISLVGLPLSAAQTQIKNMKTATAVRMTVVSTPPVVEVRIRRPDTKYQLGFSVQNGVICSLLRGGIAERGGIRVGHRIIEINGTSVVAVAHDRIVNMLATAVGEIHMKTMPTSMFRLLTGQEQPQYI.

The span at 1-16 (MSSEAVAQATAATTSP) shows a compositional bias: polar residues. Disordered stretches follow at residues 1-55 (MSSE…MIPP), 119-228 (QPAL…RTDS), 269-327 (TVAD…STVP), 432-511 (FAQQ…GTDD), and 525-593 (QREQ…SKET). The segment covering 33–44 (KGGGAGGGGGGE) has biased composition (gly residues). Low complexity predominate over residues 119-134 (QPALQQPRPSSQASSS). 2 stretches are compositionally biased toward polar residues: residues 143-156 (RQTAGSVVSSNVSP) and 169-190 (ETSGVVQNNDELLVPTSTSSDV). The span at 211–228 (GEEKSEEKRKLSGDRTDS) shows a compositional bias: basic and acidic residues. Over residues 301–318 (SLNQLRSSFNLPDDSTTV) the composition is skewed to polar residues. Low complexity-rich tracts occupy residues 432 to 445 (FAQQQIAQSAAPTP) and 454 to 464 (PSTSSGPSGAL). Polar residues predominate over residues 490–501 (NGTSTSTTNGAQ). A compositionally biased stretch (low complexity) spans 539–550 (QEAATAAQEAAE). Positions 577–593 (GAERRGSVDKKKNSKET) are enriched in basic and acidic residues. One can recognise a PID domain in the interval 604 to 788 (GVLFRARYLG…VLNSQELLGD (185 aa)). PDZ domains lie at 801-886 (EVVV…TVVS) and 892-968 (EVRI…MPTS).

In terms of assembly, interacts (via N-terminus) with egl-9 isoform e (via catalytic domain); the interaction regulates its trafficking; the interaction is direct. Interacts with rab-6.2 (in GTP-bound form). In terms of processing, phosphorylated on multiple Ser and Thr residues by cdk-5 which regulates its localization. Post-translationally, may be hydroxylated by egl-9 isoform e on multiple Pro residues which may prevent phosphorylation by cdk-5. In terms of tissue distribution, expressed in vulval epithelial cells and neurons.

It is found in the golgi apparatus. The protein resides in the golgi stack membrane. The protein localises to the trans-Golgi network membrane. It localises to the cytoplasm. Its subcellular location is the synapse. It is found in the perikaryon. In terms of biological role, required specifically for the determination of 3 vulval precursor cell fates P5.p, P6.p and P7.p during late second and early third larval stages; required for basolateral localization of receptor tyrosine kinase let-23. Could have a general but redundant role in development, functioning in diverse cell lineages to control cell fates. Regulates the trafficking of the glr-1 subunit of AMPA-type glutamate receptors (AMPRs) in the ventral nerve cord. This may be partly through interacting with the small GTPase rab-6.2 in its active GTP-bound state. The protein is Protein lin-10 of Caenorhabditis elegans.